A 479-amino-acid polypeptide reads, in one-letter code: Poly(A) polymerase catalytic subunit (479 aa).

Residues Asp202 and Asp204 contribute to the active site. The Ca(2+) site is built by Asp202, Asp204, and Asp253.

It belongs to the poxviridae poly(A) polymerase catalytic subunit family. In terms of assembly, heterodimer of a large (catalytic) subunit and a small (regulatory) subunit.

It catalyses the reaction RNA(n) + ATP = RNA(n)-3'-adenine ribonucleotide + diphosphate. Functionally, polymerase that creates the 3'-poly(A) tail of mRNA's. This is Poly(A) polymerase catalytic subunit (OPG063) from Homo sapiens (Human).